The sequence spans 597 residues: Gamma-terpinene synthase, chloroplastic (597 aa).

A chloroplast-targeting transit peptide spans 1 to 47; that stretch reads MATLSMQVSILNKQLKNLNSFGMRASKLPLVARRVDVSTTRLRPICS. Residues Asp350 and Asp354 each coordinate Mn(2+). Residues 350–354 carry the DDXXD motif motif; that stretch reads DDVYD. Homodimerization stretches follow at residues 356 to 362 and 428 to 464; these read YGTLDEL and EAKW…YFTL. Positions 494 and 502 each coordinate Mn(2+).

The protein belongs to the terpene synthase family. Homodimer. Mn(2+) is required as a cofactor. It depends on Mg(2+) as a cofactor.

The protein resides in the plastid. It is found in the chloroplast. It carries out the reaction (2E)-geranyl diphosphate = gamma-terpinene + diphosphate. It participates in secondary metabolite biosynthesis; terpenoid biosynthesis. In terms of biological role, involved in the biosynthesis of phenolic monoterpenes natural products thymol and carvacrol which have a broad range of biological activities acting as antimicrobial compounds, insecticides, antioxidants and pharmaceutical agents. Monoterpene synthase which catalyzes the conversion of geranyl diphosphate (GPP) to gamma-terpinene and minor amounts of other monoterpenes (e.g. alpha-thujene, alpha-terpinene, myrcene, sabinene, (+)-R-limonene, alpha-pinene and alpha-phellandrene). The protein is Gamma-terpinene synthase, chloroplastic of Thymus caespititius (Cretan thyme).